A 329-amino-acid polypeptide reads, in one-letter code: Ubiquitin carboxyl-terminal hydrolase isozyme L5 (329 aa).

The region spanning 7 to 225 (EWCLMESDPG…IRFNLMAIVS (219 aa)) is the UCH catalytic domain. K47 carries the N6-succinyllysine modification. C88 serves as the catalytic Nucleophile. K158 bears the N6-acetyllysine mark. Catalysis depends on H164, which acts as the Proton donor. Residue K289 is modified to N6-succinyllysine. The region spanning 291–319 (NYLPFIMELLKTLAEHQQLIPLVEKAKEK) is the ULD domain. The interval 313-329 (VEKAKEKQNAKKAQETK) is interaction with ADRM1.

It belongs to the peptidase C12 family. As to quaternary structure, component of the 19S (PA700) regulatory complex of the 26S proteasome. Interacts with ADRM1 and NFRKB. Component of the INO80 complex; specifically part of a complex module associated with N-terminus of INO80.

It localises to the cytoplasm. It is found in the nucleus. It catalyses the reaction Thiol-dependent hydrolysis of ester, thioester, amide, peptide and isopeptide bonds formed by the C-terminal Gly of ubiquitin (a 76-residue protein attached to proteins as an intracellular targeting signal).. Its activity is regulated as follows. Activated by ADRM1. Inhibited by interaction with NFRKB. Functionally, protease that specifically cleaves 'Lys-48'-linked polyubiquitin chains. Deubiquitinating enzyme associated with the 19S regulatory subunit of the 26S proteasome. Putative regulatory component of the INO80 complex; however is inactive in the INO80 complex and is activated by a transient interaction of the INO80 complex with the proteasome via ADRM1. The protein is Ubiquitin carboxyl-terminal hydrolase isozyme L5 (Uchl5) of Mus musculus (Mouse).